We begin with the raw amino-acid sequence, 288 residues long: Lysosomal thioesterase PPT2-B (288 aa).

The N-terminal stretch at 1-20 (MRGYLLLLPLLLCLVDNSVS) is a signal peptide. Residues Cys95 and Cys103 are joined by a disulfide bond. Ser97 acts as the Nucleophile in catalysis. Asn143 is a glycosylation site (N-linked (GlcNAc...) asparagine). Cys151 and Cys162 are joined by a disulfide. Residue Asn192 is glycosylated (N-linked (GlcNAc...) asparagine). Residues Asp214 and His269 contribute to the active site. N-linked (GlcNAc...) asparagine glycosylation is present at Asn275.

Belongs to the palmitoyl-protein thioesterase family.

The protein resides in the lysosome. It catalyses the reaction hexadecanoyl-CoA + H2O = hexadecanoate + CoA + H(+). The catalysed reaction is S-hexadecanoyl-N-acetylcysteamine + H2O = N-acetylcysteamine + hexadecanoate + H(+). Catalyzes the cleavage of thioester bonds from S-palmitoyl-CoA or S-palmitoyl-N-acetylcysteamine (unbranched structures) but does not have activity against palmitoylcysteine or palmitoylated proteins, branched structures or bulky head groups. Conversely, hydrolyzes both long and short chain fatty acyl-CoA substrate. The sequence is that of Lysosomal thioesterase PPT2-B (ppt2-b) from Xenopus laevis (African clawed frog).